Consider the following 174-residue polypeptide: MIQLMLYSLIITTSIIFFNMIHPLALGLTLLIQTIFVCLLSGLMTKSFWYSYILFLIFLGGMLVLFIYVTSLASNEMFNLSIKLTLFSMFILFFMFILSMILDKTSITLFLMNNEMQSIIEMNSYFTENSLSLNKLYNFPTNFVTILLMNYLLITLIVVVKITKLFKGPIRMMS.

4 consecutive transmembrane segments (helical) span residues L24–M44, I53–A73, I82–L102, and F143–T163.

The protein belongs to the complex I subunit 6 family.

The protein resides in the mitochondrion membrane. The enzyme catalyses a ubiquinone + NADH + 5 H(+)(in) = a ubiquinol + NAD(+) + 4 H(+)(out). In terms of biological role, core subunit of the mitochondrial membrane respiratory chain NADH dehydrogenase (Complex I) that is believed to belong to the minimal assembly required for catalysis. Complex I functions in the transfer of electrons from NADH to the respiratory chain. The immediate electron acceptor for the enzyme is believed to be ubiquinone. This chain is NADH-ubiquinone oxidoreductase chain 6 (mt:ND6), found in Drosophila yakuba (Fruit fly).